Reading from the N-terminus, the 130-residue chain is Protein ApaG (130 aa).

The ApaG domain maps to 3 to 127; sequence SAVTRGIEVT…FSLDVPEQRR (125 aa).

The polypeptide is Protein ApaG (Brucella canis (strain ATCC 23365 / NCTC 10854 / RM-666)).